Here is a 757-residue protein sequence, read N- to C-terminus: Maltose phosphorylase (757 aa).

Substrate is bound at residue 354-355 (WD). The active-site Proton donor is Glu-483. Residue 588 to 589 (KQ) coordinates substrate.

Belongs to the glycosyl hydrolase 65 family.

It catalyses the reaction D-maltose + phosphate = beta-D-glucose 1-phosphate + D-glucose. It functions in the pathway glycan degradation; maltose degradation. Catalyzes the phosphorolysis of maltose, leading to the formation of glucose and glucose 1-P. This is Maltose phosphorylase (mdxK) from Bacillus subtilis (strain 168).